An 850-amino-acid chain; its full sequence is Bifunctional levopimaradiene synthase, chloroplastic (850 aa).

The N-terminal 52 residues, 1 to 52 (MALPSSSLSSQIHTGATTQCIPHFHGSLNAGTSAGKRRSLYLRWGKGPSKIV), are a transit peptide targeting the chloroplast. Residue Lys-250 coordinates substrate. Mg(2+) is bound by residues Asp-383 and Asp-385. The DXDD motif signature appears at 383–386 (DIDD). Lys-470 is a binding site for substrate. 5 residues coordinate Mg(2+): Asp-602, Asp-606, Asn-746, Thr-750, and Glu-754. The short motif at 602–606 (DDLYD) is the DDXXD motif element.

It belongs to the terpene synthase family. Tpsd subfamily. Mg(2+) serves as cofactor.

It localises to the plastid. The protein localises to the chloroplast. The enzyme catalyses (2E,6E,10E)-geranylgeranyl diphosphate = (+)-copalyl diphosphate. The catalysed reaction is (+)-copalyl diphosphate = abieta-7,13-diene + diphosphate. It catalyses the reaction (+)-copalyl diphosphate = abieta-8(14),12-diene + diphosphate. It carries out the reaction (+)-copalyl diphosphate = neoabietadiene + diphosphate. Its pathway is terpene metabolism; oleoresin biosynthesis. Functionally, involved in defensive oleoresin formation in conifers in response to insect attack or other injury. Involved in diterpene (C20) olefins biosynthesis. Bifunctional enzyme that catalyzes two sequential cyclizations of geranylgeranyl diphosphate (GGPP) to levopimaradiene. Levopimaradiene is the major products of the enzyme with abietadiene and neoabietadiene. No activity with farnesyl diphosphate (FPP) as substrate. The polypeptide is Bifunctional levopimaradiene synthase, chloroplastic (Pinus contorta (Shore pine)).